The following is a 497-amino-acid chain: Proline--tRNA ligase (497 aa).

It belongs to the class-II aminoacyl-tRNA synthetase family. ProS type 3 subfamily. As to quaternary structure, homodimer.

Its subcellular location is the cytoplasm. The catalysed reaction is tRNA(Pro) + L-proline + ATP = L-prolyl-tRNA(Pro) + AMP + diphosphate. Its function is as follows. Catalyzes the attachment of proline to tRNA(Pro) in a two-step reaction: proline is first activated by ATP to form Pro-AMP and then transferred to the acceptor end of tRNA(Pro). This Bacteroides fragilis (strain ATCC 25285 / DSM 2151 / CCUG 4856 / JCM 11019 / LMG 10263 / NCTC 9343 / Onslow / VPI 2553 / EN-2) protein is Proline--tRNA ligase.